We begin with the raw amino-acid sequence, 477 residues long: MQFSSYRDLREKLLAREMSCEAVVTAYLQRIEATRDRNIYISVFYDEALRQARSLDRKLDAGETPGKLFGMPMAIKDNISIEGTGLTCASKILSNYTAVYDATVIRRLKEEDAVFLGKVNMDEFAMGSSNENSSFGPVPNPYDSTKVPGGSSGGSAAAVAGDLALVALGSDTGGSVRQPAGFCNVVGLKPTYGRISRYGVVAFGSSFDQIGILSKNADDAAAVLGVIAGNDGSDATSSHNQVPDYAAEMEGVSLRGLKIGIPKEYFPESLNSDVASVIQERLDLLRSLGAEMIPITLPESDYAIAAYYILTTAEASSNLARFDGARYGYRSEKSSDLTDMYVNSRTEGFGEEVKRRIMLGTYVLSAGYYDTYYKKAQQVRRVFLNRYREALANVDVIAGPTSPFPPFGIGDKMDDPLEMYLADVFTVPASIAGIPALSVPVGFDSSGLPVGMQLIGNFFEEGKLLGTARAVQNAGKV.

Residues K76 and S151 each act as charge relay system in the active site. S175 acts as the Acyl-ester intermediate in catalysis.

It belongs to the amidase family. GatA subfamily. Heterotrimer of A, B and C subunits.

The catalysed reaction is L-glutamyl-tRNA(Gln) + L-glutamine + ATP + H2O = L-glutaminyl-tRNA(Gln) + L-glutamate + ADP + phosphate + H(+). Functionally, allows the formation of correctly charged Gln-tRNA(Gln) through the transamidation of misacylated Glu-tRNA(Gln) in organisms which lack glutaminyl-tRNA synthetase. The reaction takes place in the presence of glutamine and ATP through an activated gamma-phospho-Glu-tRNA(Gln). This Prosthecochloris aestuarii (strain DSM 271 / SK 413) protein is Glutamyl-tRNA(Gln) amidotransferase subunit A.